The primary structure comprises 367 residues: Protein SUPPRESSOR OF FRI 4 (367 aa).

The segment at 7–66 adopts a BED-type zinc-finger fold; the sequence is RATEKVWCYYCDREFDDEKILVQHQKAKHFKCHVCHKKLSTASGMVIHVLQVHKENVTKV. Zn(2+) is bound by residues Cys38, Cys41, His54, and His59. The disordered stretch occupies residues 246 to 309; the sequence is PFSAPLPVGG…PPVIANKAPS (64 aa). Polar residues predominate over residues 273 to 295; it reads PNNSIPGGTNAHSYASGPNTSGP.

In terms of assembly, homodimer. Component of the transcription activator complex FRI-C composed of FRI, FRL1, SUF4, FLX and FES1. Interacts with LD, ASHH2, FRL1, (via C-terminus) with FRI (via C-terminus), and with SWC6, a component of the SWR1 chromatin-remodeling complex. Binds to MED18 to regulate flowering time; recruits MED18 to FLC promoter. In terms of tissue distribution, expressed in root, shoot apex, leaves, stem and flowers. Expressed in expanding leaves, in the vasculature of fully expanded leaves, in the inflorescence, throughout young floral primordia, in the carpels of older flowers and in fertilized ovules.

The protein localises to the nucleus. Functionally, sequence-specific DNA binding factor that recognizes the 5'-CCAAATTTTAAGTTT-3' sequence. Recruits the FRI-C complex to the FLC promoter. Required for FRI-mediated FLC activation, but has no effect on the expression of MAF1, MAF2, MAF3, MAF5, UFC and CO. Dispensable for the reactivation of FLC in early embryogenesis, but required to maintain high levels of FLC expression in later embryonic and vegetative development. This is Protein SUPPRESSOR OF FRI 4 from Arabidopsis thaliana (Mouse-ear cress).